The chain runs to 644 residues: Sodium/potassium/calcium exchanger 3 (644 aa).

Positions 1–44 (MRPSGDEDRARRRRRRRRRRDLLLSQLCFLASVALLLWSLSSLR) are cleaved as a signal peptide. Topologically, residues 45–107 (EQKELDLMDL…DIFTNEDRRQ (63 aa)) are extracellular. 2 N-linked (GlcNAc...) asparagine glycosylation sites follow: asparagine 71 and asparagine 86. The helical transmembrane segment at 108–128 (GAVVLHVLCAIYMFYALAIVC) threads the bilayer. Over 129–153 (DDFFVPSLEKICERLHLSEDVAGAT) the chain is Cytoplasmic. One copy of the Alpha-1 repeat lies at 149–189 (VAGATFMAAGSSAPELFTSVIGVFITKGDVGVGTIVGSAVF). The helical transmembrane segment at 154-174 (FMAAGSSAPELFTSVIGVFIT) threads the bilayer. Topologically, residues 175 to 182 (KGDVGVGT) are extracellular. A helical membrane pass occupies residues 183 to 203 (IVGSAVFNILCIIGVCGLFAG). Over 204-210 (QVVALSS) the chain is Cytoplasmic. The chain crosses the membrane as a helical span at residues 211–231 (WCLLRDSIYYTLSVIALIVFI). Residues 232 to 234 (YDE) lie on the Extracellular side of the membrane. Residues 235–255 (KVSWWESLVLVLMYLIYIVIM) form a helical membrane-spanning segment. The Cytoplasmic portion of the chain corresponds to 256–484 (KYNACIHQCF…WFMVTFASST (229 aa)). Serine 308 carries the phosphoserine modification. The tract at residues 405-442 (AEAGNETENENEDNENDEEEEEDEDDDEGPYTPFDTPS) is disordered. Residues 409–433 (NETENENEDNENDEEEEEDEDDDEG) show a composition bias toward acidic residues. The chain crosses the membrane as a helical span at residues 485 to 505 (LWIAAFSYMMVWMVTIIGYTL). At 506-510 (GIPDV) the chain is on the extracellular side. Residues 511-531 (IMGITFLAAGTSVPDCMASLI) traverse the membrane as a helical segment. An Alpha-2 repeat occupies 518–549 (AAGTSVPDCMASLIVARQGMGDMAVSNSIGSN). Over 532-549 (VARQGMGDMAVSNSIGSN) the chain is Cytoplasmic. A helical membrane pass occupies residues 550-570 (VFDILIGLGLPWALQTLAVDY). Residues 571-580 (GSYIRLNSRG) lie on the Extracellular side of the membrane. Residues 581–601 (LIYSVGLLLASVFVTVFGVHL) form a helical membrane-spanning segment. The Cytoplasmic portion of the chain corresponds to 602–615 (NKWQLDKKLGCGCL). The helical transmembrane segment at 616-636 (LLYGVFLCFSIMTEFNVFTFV) threads the bilayer. Residues 637–644 (NLPMCGDH) are Extracellular-facing.

This sequence belongs to the Ca(2+):cation antiporter (CaCA) (TC 2.A.19) family. SLC24A subfamily. As to expression, abundant in the brain. Expressed at low levels in the aorta, uterus and intestine.

It is found in the cell membrane. The enzyme catalyses Ca(2+)(out) + K(+)(out) + 4 Na(+)(in) = Ca(2+)(in) + K(+)(in) + 4 Na(+)(out). Functionally, calcium, potassium:sodium antiporter that transports 1 Ca(2+) and 1 K(+) in exchange for 4 Na(+). The chain is Sodium/potassium/calcium exchanger 3 (SLC24A3) from Homo sapiens (Human).